We begin with the raw amino-acid sequence, 448 residues long: Trigger factor (448 aa).

In terms of domain architecture, PPIase FKBP-type spans 172-257 (GDRVTVDFVG…MKKIEWPHLP (86 aa)).

Belongs to the FKBP-type PPIase family. Tig subfamily.

It localises to the cytoplasm. It carries out the reaction [protein]-peptidylproline (omega=180) = [protein]-peptidylproline (omega=0). Its function is as follows. Involved in protein export. Acts as a chaperone by maintaining the newly synthesized protein in an open conformation. Functions as a peptidyl-prolyl cis-trans isomerase. The chain is Trigger factor from Paraburkholderia xenovorans (strain LB400).